The sequence spans 604 residues: Inactive all-trans-retinol 13,14-reductase (604 aa).

An N-terminal signal peptide occupies residues 1–17 (MWWILLFLEWFVDWARG).

The protein belongs to the carotenoid/retinoid oxidoreductase family. CrtISO subfamily.

The sequence is that of Inactive all-trans-retinol 13,14-reductase (retsatl) from Danio rerio (Zebrafish).